The primary structure comprises 179 residues: Sec-independent protein translocase protein TatB (179 aa).

A helical transmembrane segment spans residues 1-21 (MFDLGFWEVLIIMLIGLLILG). 2 stretches are compositionally biased toward basic and acidic residues: residues 75–86 (KDVEKNARRFEA) and 94–106 (TFRD…DDAA). The segment at 75 to 179 (KDVEKNARRF…QGGGGEEKRQ (105 aa)) is disordered.

This sequence belongs to the TatB family. The Tat system comprises two distinct complexes: a TatABC complex, containing multiple copies of TatA, TatB and TatC subunits, and a separate TatA complex, containing only TatA subunits. Substrates initially bind to the TatABC complex, which probably triggers association of the separate TatA complex to form the active translocon.

The protein resides in the cell inner membrane. Functionally, part of the twin-arginine translocation (Tat) system that transports large folded proteins containing a characteristic twin-arginine motif in their signal peptide across membranes. Together with TatC, TatB is part of a receptor directly interacting with Tat signal peptides. TatB may form an oligomeric binding site that transiently accommodates folded Tat precursor proteins before their translocation. This is Sec-independent protein translocase protein TatB from Alkalilimnicola ehrlichii (strain ATCC BAA-1101 / DSM 17681 / MLHE-1).